The sequence spans 89 residues: Small ribosomal subunit protein bS16 (89 aa).

This sequence belongs to the bacterial ribosomal protein bS16 family.

The sequence is that of Small ribosomal subunit protein bS16 from Psychrobacter arcticus (strain DSM 17307 / VKM B-2377 / 273-4).